A 434-amino-acid chain; its full sequence is ATP-dependent protease ATPase subunit HslU (434 aa).

ATP-binding positions include I18, 60 to 65 (GVGKTE), D247, E312, and R384.

The protein belongs to the ClpX chaperone family. HslU subfamily. As to quaternary structure, a double ring-shaped homohexamer of HslV is capped on each side by a ring-shaped HslU homohexamer. The assembly of the HslU/HslV complex is dependent on binding of ATP.

It is found in the cytoplasm. Functionally, ATPase subunit of a proteasome-like degradation complex; this subunit has chaperone activity. The binding of ATP and its subsequent hydrolysis by HslU are essential for unfolding of protein substrates subsequently hydrolyzed by HslV. HslU recognizes the N-terminal part of its protein substrates and unfolds these before they are guided to HslV for hydrolysis. The chain is ATP-dependent protease ATPase subunit HslU from Brucella abortus (strain S19).